The primary structure comprises 135 residues: MSASPKERCFSFGKDQRLLNSSDFTPVFNDAPIRASNSEILILCKLSTTGKARLGLVVAKKNIKHANKRNQFKRIARESFRLKQHKLPPIDAIVLARRGADSLSKVELRRMFDGLWKRVVKKAEKLTATQPEKTG.

The protein belongs to the RnpA family. In terms of assembly, consists of a catalytic RNA component (M1 or rnpB) and a protein subunit.

It catalyses the reaction Endonucleolytic cleavage of RNA, removing 5'-extranucleotides from tRNA precursor.. Functionally, RNaseP catalyzes the removal of the 5'-leader sequence from pre-tRNA to produce the mature 5'-terminus. It can also cleave other RNA substrates such as 4.5S RNA. The protein component plays an auxiliary but essential role in vivo by binding to the 5'-leader sequence and broadening the substrate specificity of the ribozyme. This is Ribonuclease P protein component from Saccharophagus degradans (strain 2-40 / ATCC 43961 / DSM 17024).